The chain runs to 283 residues: Vitamin K epoxide reductase homolog (283 aa).

The Cytoplasmic portion of the chain corresponds to 1 to 20 (MASYLKLKAQEETWLQRHSR). Residues 21–41 (LILAILAGLGSLLTAYLTYTK) traverse the membrane as a helical segment. Over 42 to 66 (LTEQPAAFCTGDGGCDLVLSSRWAE) the chain is Periplasmic. Residues C50 and C56 are joined by a disulfide bond. 59–65 (VLSSRWA) lines the a quinone pocket. The helical transmembrane segment at 67 to 87 (FLGIPTAAVGLLGFLGVLALA) threads the bilayer. Over 88–102 (VLPDGLPLVKRWRWP) the chain is Cytoplasmic. The chain crosses the membrane as a helical span at residues 103 to 123 (ALFGLVSAMTAFEMYMLYLMV). Position 111–122 (111–122 (MTAFEMYMLYLM)) interacts with a quinone. Over 124–128 (AVLRQ) the chain is Periplasmic. A helical transmembrane segment spans residues 129 to 149 (FCMYCTTAIILVAGLGLVTVL). Residues C130 and C133 are joined by a disulfide bond. Residues 150 to 158 (GHRWLDGGK) are Cytoplasmic-facing. A helical transmembrane segment spans residues 159-179 (LAFSYILVAFLTLVTTIGVYA). Topologically, residues 180–283 (NQVPPPSPLA…ASGYPLEEGR (104 aa)) are periplasmic. The tract at residues 186 to 283 (SPLAVGLAAH…ASGYPLEEGR (98 aa)) is thioredoxin-like domain. Disulfide bonds link C209-C212 and C231-C244.

This sequence belongs to the VKOR family.

It localises to the membrane. Its activity is regulated as follows. Inhibited by ferulenol. In terms of biological role, thiol-disulfide oxidoreductase that catalyzes vitamin K-dependent disulfide bond formation in periplasmic target proteins. The polypeptide is Vitamin K epoxide reductase homolog (Synechococcus sp. (strain JA-2-3B'a(2-13)) (Cyanobacteria bacterium Yellowstone B-Prime)).